Reading from the N-terminus, the 216-residue chain is UPF0711 protein C18orf21 homolog (216 aa).

Disordered stretches follow at residues 118–185 (RSFL…ASKT) and 197–216 (SQSE…LSSL). A compositionally biased stretch (polar residues) spans 124–136 (LKSNPTTPTSKLS). A Phosphoserine modification is found at Ser-126. Thr-130 and Thr-139 each carry phosphothreonine. 2 stretches are compositionally biased toward polar residues: residues 145–157 (PSSA…SGSK) and 167–182 (TPTS…SKNA). The span at 200–209 (ESKKNPKMDF) shows a compositional bias: basic and acidic residues.

The protein belongs to the UPF0711 family.

This Bos taurus (Bovine) protein is UPF0711 protein C18orf21 homolog.